A 328-amino-acid polypeptide reads, in one-letter code: 3-dehydroquinate synthase (328 aa).

Belongs to the archaeal-type DHQ synthase family.

The catalysed reaction is 2-amino-2,3,7-trideoxy-D-lyxo-hept-6-ulosonate + NAD(+) + H2O = 3-dehydroquinate + NH4(+) + NADH + H(+). Catalyzes the oxidative deamination and cyclization of 2-amino-3,7-dideoxy-D-threo-hept-6-ulosonic acid (ADH) to yield 3-dehydroquinate (DHQ), which is fed into the canonical shikimic pathway of aromatic amino acid biosynthesis. The protein is 3-dehydroquinate synthase of Methanospirillum hungatei JF-1 (strain ATCC 27890 / DSM 864 / NBRC 100397 / JF-1).